A 206-amino-acid chain; its full sequence is uncharacterized protein (206 aa).

Disordered regions lie at residues asparagine 64–leucine 123 and valine 155–glycine 206. Residues glutamate 66–leucine 79 are compositionally biased toward polar residues. Low complexity predominate over residues alanine 97 to glutamate 107. Basic and acidic residues predominate over residues asparagine 108–serine 118. Residues valine 155–threonine 167 show a composition bias toward low complexity. A compositionally biased stretch (polar residues) spans glycine 182 to asparagine 198.

This is an uncharacterized protein from Haemophilus influenzae (strain ATCC 51907 / DSM 11121 / KW20 / Rd).